A 505-amino-acid chain; its full sequence is Lysine--tRNA ligase (505 aa).

Mg(2+) is bound by residues Glu-415 and Glu-422.

This sequence belongs to the class-II aminoacyl-tRNA synthetase family. Homodimer. Requires Mg(2+) as cofactor.

The protein localises to the cytoplasm. It catalyses the reaction tRNA(Lys) + L-lysine + ATP = L-lysyl-tRNA(Lys) + AMP + diphosphate. In Xanthomonas axonopodis pv. citri (strain 306), this protein is Lysine--tRNA ligase.